We begin with the raw amino-acid sequence, 203 residues long: Urease accessory protein UreG (203 aa).

GTP is bound at residue 11–18 (GPVGSGKT).

The protein belongs to the SIMIBI class G3E GTPase family. UreG subfamily. Homodimer. UreD, UreF and UreG form a complex that acts as a GTP-hydrolysis-dependent molecular chaperone, activating the urease apoprotein by helping to assemble the nickel containing metallocenter of UreC. The UreE protein probably delivers the nickel.

It is found in the cytoplasm. Facilitates the functional incorporation of the urease nickel metallocenter. This process requires GTP hydrolysis, probably effectuated by UreG. The protein is Urease accessory protein UreG of Prochlorococcus marinus (strain MIT 9301).